The following is a 250-amino-acid chain: NAD(P)H-quinone oxidoreductase subunit K (250 aa).

[4Fe-4S] cluster-binding residues include cysteine 63, cysteine 64, cysteine 128, and cysteine 159.

It belongs to the complex I 20 kDa subunit family. As to quaternary structure, NDH-1 can be composed of about 15 different subunits; different subcomplexes with different compositions have been identified which probably have different functions. It depends on [4Fe-4S] cluster as a cofactor.

Its subcellular location is the cellular thylakoid membrane. It catalyses the reaction a plastoquinone + NADH + (n+1) H(+)(in) = a plastoquinol + NAD(+) + n H(+)(out). It carries out the reaction a plastoquinone + NADPH + (n+1) H(+)(in) = a plastoquinol + NADP(+) + n H(+)(out). NDH-1 shuttles electrons from an unknown electron donor, via FMN and iron-sulfur (Fe-S) centers, to quinones in the respiratory and/or the photosynthetic chain. The immediate electron acceptor for the enzyme in this species is believed to be plastoquinone. Couples the redox reaction to proton translocation, and thus conserves the redox energy in a proton gradient. Cyanobacterial NDH-1 also plays a role in inorganic carbon-concentration. The sequence is that of NAD(P)H-quinone oxidoreductase subunit K from Rippkaea orientalis (strain PCC 8801 / RF-1) (Cyanothece sp. (strain PCC 8801)).